A 496-amino-acid polypeptide reads, in one-letter code: Germacrene A hydroxylase (496 aa).

Residues 1–2 are Cytoplasmic-facing; that stretch reads ME. A helical; Signal-anchor for type II membrane protein transmembrane segment spans residues 3 to 23; sequence LTLTTSLGLAVFVFILFKLLT. Residues 24–496 are Lumenal-facing; it reads GSKSTKNSLP…TAYKTANNSA (473 aa). Position 432 (Cys432) interacts with heme. N-linked (GlcNAc...) asparagine glycosylation is present at Asn493.

The protein belongs to the cytochrome P450 family. Heme serves as cofactor.

The protein resides in the endoplasmic reticulum membrane. It carries out the reaction (+)-(R)-germacrene A + 3 reduced [NADPH--hemoprotein reductase] + 3 O2 = germacra-1(10),4,11(13)-trien-12-oate + 3 oxidized [NADPH--hemoprotein reductase] + 4 H2O + 4 H(+). It functions in the pathway secondary metabolite biosynthesis; terpenoid biosynthesis. Functionally, involved in the biosynthesis of germacrene-derived sesquiterpene lactones. Catalyzes three consecutive oxidations of germacrene A to produce germacrene A acid. Could also catalyze the three-step oxidation of non-natural substrate amorphadiene to artemisinic acid. This Barnadesia spinosa (Spiny barnadesia) protein is Germacrene A hydroxylase.